The chain runs to 328 residues: PLASTID TRANSCRIPTIONALLY ACTIVE protein 6, chloroplastic (328 aa).

Low complexity predominate over residues 1 to 14; the sequence is MASSAASPSLSLLS. Positions 1-21 are disordered; that stretch reads MASSAASPSLSLLSFTSKPPY. A chloroplast-targeting transit peptide spans 1–59; sequence MASSAASPSLSLLSFTSKPPYPSGSQRLFASFRTDGLFAPLTLKSRRGRGIVVKVDDVD. The Nuclear localization signal motif lies at 267 to 275; that stretch reads RKRDRKDDL. Positions 301 to 319 match the RNA binding domain motif; that stretch reads EREEWTKTREDMEKHLRKL.

In terms of assembly, subunit of the plastid-encoded RNA polymerase (PEP) complex. Component of a large nuclear subcomplex that may include other PEP subunits (e.g. PTAC12/HMR/PAP5, PTAC14/PAP7 and PTAC7/PAP12). Binds directly to PTAC12/HMR/PAP5 in the nucleus. Interacts with MTERF5. As to expression, mostly expressed in rosette leaves, stems and flowers, and, to a lower extent, in roots and cauline leaves.

The protein localises to the plastid. It is found in the chloroplast. It localises to the chloroplast thylakoid. The protein resides in the nucleus. Its subcellular location is the nucleoplasm. In terms of biological role, essential protein involved in plastid gene expression and in chloroplast biogenesis. Links photomorphogenesis and chloroplast biogenesis through its dual localization; required for the formation of late photobodies in the nucleus, as well as for phytochrome B-mediated signaling cascade and subsequent reshaping of the plastid-encoded RNA polymerase (PEP) activity. Binds RNA via specific recognition motifs of viral origin. Recruited by MTERF5 to the transcriptionally paused region of psbEFLJ. Promotes leaf greening. The polypeptide is PLASTID TRANSCRIPTIONALLY ACTIVE protein 6, chloroplastic (Arabidopsis thaliana (Mouse-ear cress)).